A 560-amino-acid polypeptide reads, in one-letter code: Beta-hexosaminidase subunit B1 (560 aa).

The signal sequence occupies residues 1-25 (MIILKRNIVFLLIIIIVLGIFIATS). Residues asparagine 59, asparagine 69, asparagine 81, asparagine 99, asparagine 161, asparagine 293, and asparagine 346 are each glycosylated (N-linked (GlcNAc...) asparagine). Glutamate 359 functions as the Proton donor in the catalytic mechanism. 4 N-linked (GlcNAc...) asparagine glycosylation sites follow: asparagine 366, asparagine 436, asparagine 472, and asparagine 547.

This sequence belongs to the glycosyl hydrolase 20 family.

The protein localises to the lysosome. The enzyme catalyses Hydrolysis of terminal non-reducing N-acetyl-D-hexosamine residues in N-acetyl-beta-D-hexosaminides.. Responsible for the degradation of GM2 gangliosides, and a variety of other molecules containing terminal N-acetyl hexosamines. This is Beta-hexosaminidase subunit B1 (hexb1) from Dictyostelium discoideum (Social amoeba).